The following is a 129-amino-acid chain: Glycine cleavage system H protein (129 aa).

In terms of domain architecture, Lipoyl-binding spans 24-106 (TYTVGITEHA…YGQGWIFKIK (83 aa)). Position 65 is an N6-lipoyllysine (Lys65).

The protein belongs to the GcvH family. The glycine cleavage system is composed of four proteins: P, T, L and H. Requires (R)-lipoate as cofactor.

Functionally, the glycine cleavage system catalyzes the degradation of glycine. The H protein shuttles the methylamine group of glycine from the P protein to the T protein. The chain is Glycine cleavage system H protein from Cronobacter sakazakii (strain ATCC BAA-894) (Enterobacter sakazakii).